The chain runs to 212 residues: MPARRKYAVRDKWKLKKWYEVIAPPVFGNIVIGTTPADDPLKLIGRVMETTLYDITGDITQVHVRLYFQIIDVKENKAITRFKGHELSRDYIKSLIRRKSSKIQGIFNVVTKDGYHLRLTIIALTSYRCKTSQKRAIRKIMEEYVKERVPQLTLDELIHEMVFGKMSAVIAERARKIYPIRKVEVYKSKLLMIPTPEGPKPAVVISPLQLGR.

This sequence belongs to the eukaryotic ribosomal protein eS1 family.

In Staphylothermus marinus (strain ATCC 43588 / DSM 3639 / JCM 9404 / F1), this protein is Small ribosomal subunit protein eS1.